The chain runs to 312 residues: Glyoxylate/hydroxypyruvate reductase A (312 aa).

Residue arginine 227 is part of the active site. Residue histidine 275 is the Proton donor of the active site.

The protein belongs to the D-isomer specific 2-hydroxyacid dehydrogenase family. GhrA subfamily.

The protein localises to the cytoplasm. The enzyme catalyses glycolate + NADP(+) = glyoxylate + NADPH + H(+). The catalysed reaction is (R)-glycerate + NAD(+) = 3-hydroxypyruvate + NADH + H(+). It catalyses the reaction (R)-glycerate + NADP(+) = 3-hydroxypyruvate + NADPH + H(+). Functionally, catalyzes the NADPH-dependent reduction of glyoxylate and hydroxypyruvate into glycolate and glycerate, respectively. The protein is Glyoxylate/hydroxypyruvate reductase A of Salmonella paratyphi C (strain RKS4594).